The primary structure comprises 271 residues: Formamidopyrimidine-DNA glycosylase (271 aa).

Catalysis depends on Pro2, which acts as the Schiff-base intermediate with DNA. Glu3 acts as the Proton donor in catalysis. Lys56 acts as the Proton donor; for beta-elimination activity in catalysis. Residues His89, Arg107, and Arg151 each contribute to the DNA site. The FPG-type zinc-finger motif lies at 236-270; the sequence is MVYDRAGLPCRVCAAPIKSIRQGQRSSFYCATCQK. Arg260 functions as the Proton donor; for delta-elimination activity in the catalytic mechanism.

The protein belongs to the FPG family. Monomer. It depends on Zn(2+) as a cofactor.

The enzyme catalyses Hydrolysis of DNA containing ring-opened 7-methylguanine residues, releasing 2,6-diamino-4-hydroxy-5-(N-methyl)formamidopyrimidine.. It carries out the reaction 2'-deoxyribonucleotide-(2'-deoxyribose 5'-phosphate)-2'-deoxyribonucleotide-DNA = a 3'-end 2'-deoxyribonucleotide-(2,3-dehydro-2,3-deoxyribose 5'-phosphate)-DNA + a 5'-end 5'-phospho-2'-deoxyribonucleoside-DNA + H(+). Functionally, involved in base excision repair of DNA damaged by oxidation or by mutagenic agents. Acts as a DNA glycosylase that recognizes and removes damaged bases. Has a preference for oxidized purines, such as 7,8-dihydro-8-oxoguanine (8-oxoG). Has AP (apurinic/apyrimidinic) lyase activity and introduces nicks in the DNA strand. Cleaves the DNA backbone by beta-delta elimination to generate a single-strand break at the site of the removed base with both 3'- and 5'-phosphates. The polypeptide is Formamidopyrimidine-DNA glycosylase (Polaromonas naphthalenivorans (strain CJ2)).